The sequence spans 84 residues: Delta-conotoxin-like Bt6.4 (84 aa).

An N-terminal signal peptide occupies residues Met-1–Ala-22. Residues Asp-23–Arg-57 constitute a propeptide that is removed on maturation. Disulfide bonds link Cys-58/Cys-74, Cys-65/Cys-78, and Cys-73/Cys-82.

This sequence belongs to the conotoxin O1 superfamily. As to expression, expressed by the venom duct.

The protein localises to the secreted. This toxin activates voltage-gated sodium channels. It shifts the voltage-dependence of activation to more hyperpolarized potentials but has only little effect on channel inactivation. It is active on Nav1.3/SCN3A (EC(50)=3.98 nM), Nav1.4/SCN4A (EC(50)=4.99 nM), Nav1.6/SCN8A (EC(50)=1.27 nM) and Nav1.7/SCN9A (EC(50)=2.42 nM) voltage-gated sodium channels. In vivo, it induces nocifensive or pain-like behaviors in mice when injected intraplantarly. The sequence is that of Delta-conotoxin-like Bt6.4 from Conus betulinus (Beech cone).